The sequence spans 588 residues: MMRTHYCGALNRNNIGQDVTLSGWVHRRRDLGGLIFIDMRDRDGIVQVCFDPKYQDALTAAAGLRNEFCIQIKGEVIARPDNQINKNMATGEVEVLAKELRIYNASDVLPLDFNQNNTEEQRLKYRYLDLRRPEMAQRLKTRAKITSFVRRFMDDNGFLDIETPMLTKATPEGARDYLVPSRVHKGKFYALPQSPQLFKQLLMMSGFDRYYQIVKCFRDEDLRADRQPEFTQIDVETSFLTAPEVREIMERMVHGLWLDTIGVDLGKFPVMTWQEAMRRFGSDKPDLRNPLEMVDVADIVKDVEFKVFNEPANNPNGRVAVIRVPNGAEITRKQIDEYTQFVGIYGAKGLAWAKVNDINAGLEGVQSPIAKFLNEDVWKGLAERVNAQTGDILFFGADKWQTTTDAMGALRLKLGRDLGLTRLDEWQPLWVIDFPMFERDEEGNLAAMHHPFTSPKDFSPEQLEADPTSAVANAYDMVINGYEVGGGSVRIFDPKMQQTVFRILGIDEEQQREKFGFLLDALKFGTPPHAGLAFGLDRLTMLLTGTENIRDVIAFPKTTAAACLMTEAPSFANPQALEELAISVVKAE.

Glu172 is an L-aspartate binding site. The aspartate stretch occupies residues 196–199; the sequence is QLFK. Arg218 contributes to the L-aspartate binding site. ATP contacts are provided by residues 218–220 and Gln227; that span reads RDE. His449 provides a ligand contact to L-aspartate. Glu483 lines the ATP pocket. Position 490 (Arg490) interacts with L-aspartate. 535-538 contributes to the ATP binding site; it reads GLDR.

This sequence belongs to the class-II aminoacyl-tRNA synthetase family. Type 1 subfamily. As to quaternary structure, homodimer.

It is found in the cytoplasm. It carries out the reaction tRNA(Asp) + L-aspartate + ATP = L-aspartyl-tRNA(Asp) + AMP + diphosphate. Catalyzes the attachment of L-aspartate to tRNA(Asp) in a two-step reaction: L-aspartate is first activated by ATP to form Asp-AMP and then transferred to the acceptor end of tRNA(Asp). The chain is Aspartate--tRNA ligase from Haemophilus influenzae (strain ATCC 51907 / DSM 11121 / KW20 / Rd).